The chain runs to 179 residues: Large ribosomal subunit protein uL6 (179 aa).

Belongs to the universal ribosomal protein uL6 family. As to quaternary structure, part of the 50S ribosomal subunit.

This protein binds to the 23S rRNA, and is important in its secondary structure. It is located near the subunit interface in the base of the L7/L12 stalk, and near the tRNA binding site of the peptidyltransferase center. The protein is Large ribosomal subunit protein uL6 of Streptomyces avermitilis (strain ATCC 31267 / DSM 46492 / JCM 5070 / NBRC 14893 / NCIMB 12804 / NRRL 8165 / MA-4680).